We begin with the raw amino-acid sequence, 427 residues long: Adenylosuccinate synthetase (427 aa).

Residues 12-18 (GDEGKGK) and 40-42 (GHT) contribute to the GTP site. Asp13 functions as the Proton acceptor in the catalytic mechanism. The Mg(2+) site is built by Asp13 and Gly40. IMP-binding positions include 13–16 (DEGK), 38–41 (NAGH), Thr128, Arg142, Gln223, Thr238, and Arg302. Catalysis depends on His41, which acts as the Proton donor. 298-304 (TTTGRNR) is a substrate binding site. GTP-binding positions include Arg304, 330–332 (KLD), and 412–414 (GVG).

It belongs to the adenylosuccinate synthetase family. In terms of assembly, homodimer. Requires Mg(2+) as cofactor.

It is found in the cytoplasm. The catalysed reaction is IMP + L-aspartate + GTP = N(6)-(1,2-dicarboxyethyl)-AMP + GDP + phosphate + 2 H(+). The protein operates within purine metabolism; AMP biosynthesis via de novo pathway; AMP from IMP: step 1/2. Functionally, plays an important role in the de novo pathway of purine nucleotide biosynthesis. Catalyzes the first committed step in the biosynthesis of AMP from IMP. The polypeptide is Adenylosuccinate synthetase (Thermobifida fusca (strain YX)).